Reading from the N-terminus, the 225-residue chain is N-(5'-phosphoribosyl)anthranilate isomerase (225 aa).

It belongs to the TrpF family.

It carries out the reaction N-(5-phospho-beta-D-ribosyl)anthranilate = 1-(2-carboxyphenylamino)-1-deoxy-D-ribulose 5-phosphate. It participates in amino-acid biosynthesis; L-tryptophan biosynthesis; L-tryptophan from chorismate: step 3/5. In Nitrobacter winogradskyi (strain ATCC 25391 / DSM 10237 / CIP 104748 / NCIMB 11846 / Nb-255), this protein is N-(5'-phosphoribosyl)anthranilate isomerase.